A 104-amino-acid chain; its full sequence is Putative ankyrin repeat protein L677 (104 aa).

ANK repeat units follow at residues 16–43 (FNKS…NPNL), 44–73 (DISH…SNSV), and 75–102 (LEAY…NKSI).

The sequence is that of Putative ankyrin repeat protein L677 from Acanthamoeba polyphaga (Amoeba).